The sequence spans 337 residues: Ketol-acid reductoisomerase (NADP(+)) (337 aa).

One can recognise a KARI N-terminal Rossmann domain in the interval 3-183 (VEMFYDDDAD…GGTRAGVIKT (181 aa)). Residues 26–29 (YGSQ), Lys-49, Ser-52, Ser-54, and 84–87 (DTAQ) each bind NADP(+). The active site involves His-109. Residue Gly-135 coordinates NADP(+). Positions 184 to 329 (TFKEETETDL…KKLRDLMSWV (146 aa)) constitute a KARI C-terminal knotted domain. Residues Asp-192, Glu-196, Glu-228, and Glu-232 each coordinate Mg(2+). Ser-253 serves as a coordination point for substrate.

The protein belongs to the ketol-acid reductoisomerase family. Mg(2+) serves as cofactor.

The catalysed reaction is (2R)-2,3-dihydroxy-3-methylbutanoate + NADP(+) = (2S)-2-acetolactate + NADPH + H(+). It carries out the reaction (2R,3R)-2,3-dihydroxy-3-methylpentanoate + NADP(+) = (S)-2-ethyl-2-hydroxy-3-oxobutanoate + NADPH + H(+). It functions in the pathway amino-acid biosynthesis; L-isoleucine biosynthesis; L-isoleucine from 2-oxobutanoate: step 2/4. Its pathway is amino-acid biosynthesis; L-valine biosynthesis; L-valine from pyruvate: step 2/4. Involved in the biosynthesis of branched-chain amino acids (BCAA). Catalyzes an alkyl-migration followed by a ketol-acid reduction of (S)-2-acetolactate (S2AL) to yield (R)-2,3-dihydroxy-isovalerate. In the isomerase reaction, S2AL is rearranged via a Mg-dependent methyl migration to produce 3-hydroxy-3-methyl-2-ketobutyrate (HMKB). In the reductase reaction, this 2-ketoacid undergoes a metal-dependent reduction by NADPH to yield (R)-2,3-dihydroxy-isovalerate. This chain is Ketol-acid reductoisomerase (NADP(+)), found in Rhodococcus jostii (strain RHA1).